A 327-amino-acid chain; its full sequence is DNA-directed RNA polymerase subunit alpha (327 aa).

The alpha N-terminal domain (alpha-NTD) stretch occupies residues 1-243 (MEKFLKYEIK…EHLNPIVNVN (243 aa)). The interval 260-327 (RVRSFAKQIE…VHELGLKLRS (68 aa)) is alpha C-terminal domain (alpha-CTD).

Belongs to the RNA polymerase alpha chain family. In terms of assembly, homodimer. The RNAP catalytic core consists of 2 alpha, 1 beta, 1 beta' and 1 omega subunit. When a sigma factor is associated with the core the holoenzyme is formed, which can initiate transcription.

It carries out the reaction RNA(n) + a ribonucleoside 5'-triphosphate = RNA(n+1) + diphosphate. In terms of biological role, DNA-dependent RNA polymerase catalyzes the transcription of DNA into RNA using the four ribonucleoside triphosphates as substrates. In Mycoplasma pneumoniae (strain ATCC 29342 / M129 / Subtype 1) (Mycoplasmoides pneumoniae), this protein is DNA-directed RNA polymerase subunit alpha.